A 418-amino-acid chain; its full sequence is 3-phosphoshikimate 1-carboxyvinyltransferase (418 aa).

Positions 26, 27, and 31 each coordinate 3-phosphoshikimate. Position 26 (Lys-26) interacts with phosphoenolpyruvate. Positions 97 and 125 each coordinate phosphoenolpyruvate. Positions 170, 171, 172, 297, 320, and 324 each coordinate 3-phosphoshikimate. Phosphoenolpyruvate is bound at residue Gln-172. Asp-297 (proton acceptor) is an active-site residue. 3 residues coordinate phosphoenolpyruvate: Arg-328, Arg-375, and Lys-400.

It belongs to the EPSP synthase family. Monomer.

The protein resides in the cytoplasm. The catalysed reaction is 3-phosphoshikimate + phosphoenolpyruvate = 5-O-(1-carboxyvinyl)-3-phosphoshikimate + phosphate. It functions in the pathway metabolic intermediate biosynthesis; chorismate biosynthesis; chorismate from D-erythrose 4-phosphate and phosphoenolpyruvate: step 6/7. In terms of biological role, catalyzes the transfer of the enolpyruvyl moiety of phosphoenolpyruvate (PEP) to the 5-hydroxyl of shikimate-3-phosphate (S3P) to produce enolpyruvyl shikimate-3-phosphate and inorganic phosphate. The sequence is that of 3-phosphoshikimate 1-carboxyvinyltransferase from Pseudomonas syringae pv. tomato (strain ATCC BAA-871 / DC3000).